Here is a 620-residue protein sequence, read N- to C-terminus: Probable potassium transport system protein Kup 1 (620 aa).

The next 12 membrane-spanning stretches (helical) occupy residues 7-27, 50-70, 102-122, 136-156, 168-188, 211-231, 246-266, 284-304, 336-356, 368-388, 393-413, and 415-435; these read GIGL…TSPL, VLSL…VIVI, MMLG…TPAI, PDLK…LFAI, FGPV…ANIV, LMSF…EALY, WFGL…ALLI, MVVP…QAVI, IYVP…VVGF, IAVT…AALL, PVVV…FFAA, and IIKV…SFTV.

It belongs to the HAK/KUP transporter (TC 2.A.72) family.

The protein resides in the cell inner membrane. The catalysed reaction is K(+)(in) + H(+)(in) = K(+)(out) + H(+)(out). Functionally, transport of potassium into the cell. Likely operates as a K(+):H(+) symporter. The polypeptide is Probable potassium transport system protein Kup 1 (Rhodopseudomonas palustris (strain ATCC BAA-98 / CGA009)).